The chain runs to 319 residues: Peroxidase 13 (319 aa).

Positions 1 to 22 (MITIALFLVLLYFHDQLGYSAA) are cleaved as a signal peptide. 4 cysteine pairs are disulfide-bonded: C33/C111, C66/C71, C117/C315, and C196/C222. The active-site Proton acceptor is H64. Positions 65, 68, 70, 72, and 74 each coordinate Ca(2+). Substrate is bound at residue P158. H189 contacts heme b. Residue T190 participates in Ca(2+) binding. Residues D235, S238, and D243 each contribute to the Ca(2+) site. Residue N280 is glycosylated (N-linked (GlcNAc...) asparagine).

Belongs to the peroxidase family. Classical plant (class III) peroxidase subfamily. The cofactor is heme b. Ca(2+) is required as a cofactor.

The protein resides in the secreted. The enzyme catalyses 2 a phenolic donor + H2O2 = 2 a phenolic radical donor + 2 H2O. Removal of H(2)O(2), oxidation of toxic reductants, biosynthesis and degradation of lignin, suberization, auxin catabolism, response to environmental stresses such as wounding, pathogen attack and oxidative stress. These functions might be dependent on each isozyme/isoform in each plant tissue. The polypeptide is Peroxidase 13 (PER13) (Arabidopsis thaliana (Mouse-ear cress)).